The sequence spans 607 residues: Glutamine--fructose-6-phosphate aminotransferase [isomerizing] (607 aa).

Residue cysteine 2 is the Nucleophile; for GATase activity of the active site. Residues cysteine 2–asparagine 217 form the Glutamine amidotransferase type-2 domain. 2 consecutive SIS domains span residues isoleucine 283–alanine 422 and valine 455–proline 597. Lysine 602 acts as the For Fru-6P isomerization activity in catalysis.

In terms of assembly, homodimer.

It localises to the cytoplasm. The enzyme catalyses D-fructose 6-phosphate + L-glutamine = D-glucosamine 6-phosphate + L-glutamate. Its function is as follows. Catalyzes the first step in hexosamine metabolism, converting fructose-6P into glucosamine-6P using glutamine as a nitrogen source. The sequence is that of Glutamine--fructose-6-phosphate aminotransferase [isomerizing] from Brucella suis biovar 1 (strain 1330).